We begin with the raw amino-acid sequence, 137 residues long: MPESTGLIAHNWGFAIFLLGVVGLCAFMLGLSSLLGSKAWGRSKNEPFESGMLPTGSARLRLSAKFYLVAMLFVIFDIEALFLFAWSVSVRESGWTGFVEALVFIAILLAGLVYLWRVGALDWAPEGRRNRQAKLKQ.

A run of 3 helical transmembrane segments spans residues 12–32 (WGFA…LGLS), 66–86 (FYLV…LFAW), and 95–115 (WTGF…LVYL).

It belongs to the complex I subunit 3 family. NDH-1 is composed of 13 different subunits. Subunits NuoA, H, J, K, L, M, N constitute the membrane sector of the complex.

The protein localises to the cell inner membrane. The catalysed reaction is a quinone + NADH + 5 H(+)(in) = a quinol + NAD(+) + 4 H(+)(out). Its function is as follows. NDH-1 shuttles electrons from NADH, via FMN and iron-sulfur (Fe-S) centers, to quinones in the respiratory chain. The immediate electron acceptor for the enzyme in this species is believed to be ubiquinone. Couples the redox reaction to proton translocation (for every two electrons transferred, four hydrogen ions are translocated across the cytoplasmic membrane), and thus conserves the redox energy in a proton gradient. The protein is NADH-quinone oxidoreductase subunit A of Pseudomonas savastanoi pv. phaseolicola (strain 1448A / Race 6) (Pseudomonas syringae pv. phaseolicola (strain 1448A / Race 6)).